A 609-amino-acid chain; its full sequence is Albumin (609 aa).

The N-terminal stretch at M1–S18 is a signal peptide. Positions R19–R24 are excised as a propeptide. 3 Albumin domains span residues R19 to R210, D211 to P403, and L404 to A601. H27 is a Cu cation binding site. S29 carries the post-translational modification Phosphoserine; by FAM20C. E30 contacts Ca(2+). K36 carries N-linked (Glc) (glycation) lysine glycosylation. Position 37 (D37) interacts with Ca(2+). The N-linked (Glc) (glycation) lysine; in vitro glycan is linked to K75. Cysteines 77 and 86 form a disulfide. Phosphoserine; by FAM20C occurs at positions 82 and 89. H91 contacts Zn(2+). 4 disulfides stabilise this stretch: C99-C115, C114-C125, C148-C193, and C192-C201. At T107 the chain carries Phosphothreonine; by FAM20C. 2 N-linked (Glc) (glycation) lysine; in vitro glycosylation sites follow: K161 and K186. K223 is a glycosylation site (N-linked (Glc) (glycation) lysine; in vitro). Disulfide bonds link C224–C270 and C269–C277. At K229 the chain carries N6-succinyllysine. An N-linked (Glc) (glycation) lysine; in vitro glycan is attached at K249. A glycan (N-linked (Glc) (glycation) lysine) is linked at K257. Residue K264 coordinates (4Z,15Z)-bilirubin IXalpha. E268 is a Ca(2+) binding site. Residues H271 and D273 each contribute to the Zn(2+) site. 4 residues coordinate Ca(2+): D273, E276, D279, and D283. Disulfide bonds link C289-C303 and C302-C313. S297 is subject to Phosphoserine. K300 carries an N-linked (Glc) (glycation) lysine; in vitro glycan. An N-linked (Glc) (glycation) lysine glycan is attached at K305. A glycan (N-linked (Glc) (glycation) lysine; in vitro) is linked at K337. Intrachain disulfides connect C340/C385 and C384/C393. A glycan (N-linked (Glc) (glycation) lysine) is linked at K341. N-linked (GlcNAc...) asparagine; in variant Redhill glycosylation is present at N342. K347 is a glycosylation site (N-linked (Glc) (glycation) lysine; in vitro). K375 is a glycosylation site (N-linked (Glc) (glycation) lysine). N-linked (Glc) (glycation) lysine; in vitro glycans are attached at residues K402 and K437. Disulfide bonds link C416–C462, C461–C472, C485–C501, and C500–C511. S443 carries the phosphoserine modification. Phosphothreonine is present on residues T444 and T446. K460 carries the N6-succinyllysine modification. Residue K463 is glycosylated (N-linked (Glc) (glycation) lysine). An N-linked (Glc) (glycation) lysine; in vitro glycan is attached at K468. Residue S513 is modified to Phosphoserine. The N-linked (GlcNAc...) asparagine; in variant Casebrook glycan is linked to D518. Disulfide bonds link C538–C583 and C582–C591. K543 bears the N6-succinyllysine mark. N-linked (Glc) (glycation) lysine glycosylation occurs at K549. Position 558 is an N6-methyllysine; alternate (K558). K558 is a glycosylation site (N-linked (Glc) (glycation) lysine; alternate). 2 N-linked (Glc) (glycation) lysine; in vitro glycosylation sites follow: K560 and K569. K588 carries the N6-succinyllysine modification. K597 is a glycosylation site (N-linked (Glc) (glycation) lysine; in vitro).

Belongs to the ALB/AFP/VDB family. In terms of assembly, interacts with FCGRT; this interaction regulates ALB homeostasis. Interacts with TASOR. In plasma, occurs in a covalently-linked complex with chromophore-bound alpha-1-microglobulin with molar ratio 1:2 and 1:1; this interaction does not prevent fatty acid binding to ALB. Post-translationally, kenitra variant is partially O-glycosylated at Thr-620. It has two new disulfide bonds Cys-600 to Cys-602 and Cys-601 to Cys-606. In terms of processing, glycated in diabetic patients. Phosphorylated by FAM20C in the extracellular medium. Post-translationally, acetylated on Lys-223 by acetylsalicylic acid. In terms of tissue distribution, plasma.

The protein localises to the secreted. Binds water, Ca(2+), Na(+), K(+), fatty acids, hormones, bilirubin and drugs. Its main function is the regulation of the colloidal osmotic pressure of blood. Major zinc transporter in plasma, typically binds about 80% of all plasma zinc. Major calcium and magnesium transporter in plasma, binds approximately 45% of circulating calcium and magnesium in plasma. Potentially has more than two calcium-binding sites and might additionally bind calcium in a non-specific manner. The shared binding site between zinc and calcium at residue Asp-273 suggests a crosstalk between zinc and calcium transport in the blood. The rank order of affinity is zinc &gt; calcium &gt; magnesium. Binds to the bacterial siderophore enterobactin and inhibits enterobactin-mediated iron uptake of E.coli from ferric transferrin, and may thereby limit the utilization of iron and growth of enteric bacteria such as E.coli. Does not prevent iron uptake by the bacterial siderophore aerobactin. This chain is Albumin (ALB), found in Homo sapiens (Human).